The primary structure comprises 474 residues: Synaptotagmin-17 (474 aa).

Positions 60 to 112 are disordered; it reads WLMASRSSDKDGDSVHTASEVPLTPRTNSPDGRRSSSDTSKSTYSLTRRISSL. Over residues 96–112 the composition is skewed to low complexity; that stretch reads SDTSKSTYSLTRRISSL. Phosphoserine occurs at positions 118 and 119. 2 consecutive C2 domains span residues 184 to 310 and 321 to 455; these read QLGM…HWWK and ELGE…EQWH.

Belongs to the synaptotagmin family.

The protein resides in the membrane. Its function is as follows. Plays a role in dendrite formation by melanocytes. This is Synaptotagmin-17 (SYT17) from Pongo abelii (Sumatran orangutan).